Here is a 194-residue protein sequence, read N- to C-terminus: Segregation and condensation protein B (194 aa).

Belongs to the ScpB family. Homodimer. Homodimerization may be required to stabilize the binding of ScpA to the Smc head domains. Component of a cohesin-like complex composed of ScpA, ScpB and the Smc homodimer, in which ScpA and ScpB bind to the head domain of Smc. The presence of the three proteins is required for the association of the complex with DNA.

The protein localises to the cytoplasm. Its function is as follows. Participates in chromosomal partition during cell division. May act via the formation of a condensin-like complex containing Smc and ScpA that pull DNA away from mid-cell into both cell halves. This Brevibacillus brevis (strain 47 / JCM 6285 / NBRC 100599) protein is Segregation and condensation protein B.